The sequence spans 365 residues: MSAASKSIDVMLKPLLVGGRPISNRFVMAPLTRCRADDNHVPTAAMVKHYSDRASMGLIITEATQIQKGYSTFAHEGGIYDKEHVDGWRKVTDAVHDKGGIIFCQIHNGGRSTVPSNVDEGVRIVAPSAVAITGHKCAGSFARNGKTQPYPVPHAMAAEEIASYVNLYAAAARNAIAAGFDGVEVHGANGYLIDQFLKTSSNQRTDEYGGSIENRCRFLFEVLDAVIQAIGRERVGLRISPLNSFNDQSDEDPQALTRYICSQLNLRTIAFLDVMRGDFFSPARGADKWAREEYEGVLFTGMSFEIEEAAKAVESGAADAVVFGTKALANPDLVARAVAGAPLNKPDPATFYTTGEAGYNDYPFM.

FMN contacts are provided by residues 30–32 (PLT), Ala63, and Gln105. Tyr191 acts as the Proton donor in catalysis. FMN is bound by residues Arg238, Ser303, and 324–325 (GT).

This sequence belongs to the NADH:flavin oxidoreductase/NADH oxidase family. As to quaternary structure, monomer. It depends on FMN as a cofactor.

Its subcellular location is the cytoplasm. The protein resides in the cytosol. In terms of biological role, may function as a flavin mononucleotide (FMN)-dependent alkene reductase on substrates carrying alpha,beta-unsaturated carbonyl groups (ketones, aldehydes, carboxylic acids, esters, lactones or cyclic imides). The catalysis depends on NAD(P)H, which acts as a hydride donor for the reduction. Seems to be involved in metabolic pathways required for efficient replication of amastigotes within macrophages. Acts as a FMN-dependent nitroreductase that activates anti-leishmanial bicyclic nitroaromatic prodrugs including delamanid, DNDI-VL-2098 and (R)-PA-824, forming toxic products that kill the parasites. The sequence is that of Probable flavin mononucleotide-dependent alkene reductase from Leishmania infantum.